Consider the following 66-residue polypeptide: U-scoloptoxin(24)-Er2a (66 aa).

The signal sequence occupies residues 1–23; the sequence is MVKPLHCLIGIVLFLAVLNAGNG. Residues 43–66 form a disordered region; it reads SLFHGNQRKKRSEEKRFSDMEQTK. Positions 53-66 are enriched in basic and acidic residues; that stretch reads RSEEKRFSDMEQTK.

The protein belongs to the scoloptoxin-24 family. As to expression, expressed by the venom gland.

The protein localises to the secreted. The chain is U-scoloptoxin(24)-Er2a from Ethmostigmus rubripes (Giant centipede).